The following is a 161-amino-acid chain: Pathogenesis-related protein 1 (161 aa).

The N-terminal stretch at 1–26 (MKVTSYSRILIILAALVGALVVPLKA) is a signal peptide. The 116-residue stretch at 34–149 (VNAHNQARSQ…NGGTIISCNY (116 aa)) folds into the SCP domain. 3 disulfides stabilise this stretch: cysteine 70-cysteine 138, cysteine 113-cysteine 117, and cysteine 133-cysteine 147.

It belongs to the CRISP family. In terms of tissue distribution, expressed in flowers, stems and roots but not in leaves.

In terms of biological role, probably involved in the defense reaction of plants against pathogens. This chain is Pathogenesis-related protein 1, found in Arabidopsis thaliana (Mouse-ear cress).